A 499-amino-acid chain; its full sequence is Maturase K (499 aa).

Belongs to the intron maturase 2 family. MatK subfamily.

It localises to the plastid. The protein localises to the chloroplast. Its function is as follows. Usually encoded in the trnK tRNA gene intron. Probably assists in splicing its own and other chloroplast group II introns. This Gymnocladus dioicus (Kentucky coffee tree) protein is Maturase K.